The primary structure comprises 240 residues: UDP-2,3-diacylglucosamine hydrolase (240 aa).

Mn(2+) is bound by residues D8, H10, D41, N79, and H114. 79–80 (NR) lines the substrate pocket. Substrate is bound by residues D122, S160, T164, K167, and H195. The Mn(2+) site is built by H195 and H197.

This sequence belongs to the LpxH family. Mn(2+) is required as a cofactor.

The protein resides in the cell inner membrane. The catalysed reaction is UDP-2-N,3-O-bis[(3R)-3-hydroxytetradecanoyl]-alpha-D-glucosamine + H2O = 2-N,3-O-bis[(3R)-3-hydroxytetradecanoyl]-alpha-D-glucosaminyl 1-phosphate + UMP + 2 H(+). The protein operates within glycolipid biosynthesis; lipid IV(A) biosynthesis; lipid IV(A) from (3R)-3-hydroxytetradecanoyl-[acyl-carrier-protein] and UDP-N-acetyl-alpha-D-glucosamine: step 4/6. Its function is as follows. Hydrolyzes the pyrophosphate bond of UDP-2,3-diacylglucosamine to yield 2,3-diacylglucosamine 1-phosphate (lipid X) and UMP by catalyzing the attack of water at the alpha-P atom. Involved in the biosynthesis of lipid A, a phosphorylated glycolipid that anchors the lipopolysaccharide to the outer membrane of the cell. This Pseudomonas aeruginosa (strain UCBPP-PA14) protein is UDP-2,3-diacylglucosamine hydrolase.